The following is a 929-amino-acid chain: Protocadherin gamma-B7 (929 aa).

A signal peptide spans 1-30 (MGGSCAQRRRAGPRQVLFPLLLPLFYPTLC). 6 consecutive Cadherin domains span residues 31–133 (EPIR…APQF), 134–242 (RKDE…PPVF), 243–347 (SQDV…SPEI), 348–452 (IITS…APVF), 453–562 (GQSA…APRV), and 570–675 (DGSA…LPDF). Over 31–691 (EPIRYSIPEE…SDSQAEMQFY (661 aa)) the chain is Extracellular. Residues asparagine 419 and asparagine 545 are each glycosylated (N-linked (GlcNAc...) asparagine). Residues 692–712 (LVVALALISVLFLLAVILAIA) form a helical membrane-spanning segment. At 713–929 (LRLRQSFSPT…KKKSGKKEKK (217 aa)) the chain is on the cytoplasmic side. 2 disordered regions span residues 806-838 (QAPP…WPNN) and 899-929 (ATLT…KEKK). The span at 807–838 (APPNTDWRFSQAQRPGTSGSQNGDDTGTWPNN) shows a compositional bias: polar residues. The segment covering 919–929 (NKKKSGKKEKK) has biased composition (basic residues).

It is found in the cell membrane. Functionally, potential calcium-dependent cell-adhesion protein. May be involved in the establishment and maintenance of specific neuronal connections in the brain. The protein is Protocadherin gamma-B7 (PCDHGB7) of Homo sapiens (Human).